The primary structure comprises 244 residues: Phosphoadenosine 5'-phosphosulfate reductase (244 aa).

Cysteine 239 (nucleophile; cysteine thiosulfonate intermediate) is an active-site residue.

Belongs to the PAPS reductase family. CysH subfamily.

Its subcellular location is the cytoplasm. The catalysed reaction is [thioredoxin]-disulfide + sulfite + adenosine 3',5'-bisphosphate + 2 H(+) = [thioredoxin]-dithiol + 3'-phosphoadenylyl sulfate. Its pathway is sulfur metabolism; hydrogen sulfide biosynthesis; sulfite from sulfate: step 3/3. Catalyzes the formation of sulfite from phosphoadenosine 5'-phosphosulfate (PAPS) using thioredoxin as an electron donor. The sequence is that of Phosphoadenosine 5'-phosphosulfate reductase from Cronobacter sakazakii (strain ATCC BAA-894) (Enterobacter sakazakii).